The primary structure comprises 385 residues: tRNA-specific 2-thiouridylase MnmA (385 aa).

ATP-binding positions include 8–15 (AMSGGVDS) and Leu-34. Cys-102 acts as the Nucleophile in catalysis. The cysteines at positions 102 and 200 are disulfide-linked. Residue Gly-126 participates in ATP binding. The tract at residues 150–152 (KDQ) is interaction with tRNA. Residue Cys-200 is the Cysteine persulfide intermediate of the active site. The segment at 307–308 (RY) is interaction with tRNA.

This sequence belongs to the MnmA/TRMU family.

It localises to the cytoplasm. The catalysed reaction is S-sulfanyl-L-cysteinyl-[protein] + uridine(34) in tRNA + AH2 + ATP = 2-thiouridine(34) in tRNA + L-cysteinyl-[protein] + A + AMP + diphosphate + H(+). Functionally, catalyzes the 2-thiolation of uridine at the wobble position (U34) of tRNA, leading to the formation of s(2)U34. This is tRNA-specific 2-thiouridylase MnmA from Heliobacterium modesticaldum (strain ATCC 51547 / Ice1).